A 193-amino-acid polypeptide reads, in one-letter code: Lipid A acyltransferase PagP (193 aa).

Residues 1–32 (MNGMAVVMIIRKYFLIIALLVMPWLAIPSVSA) form the signal peptide. Active-site residues include histidine 65, aspartate 108, and serine 109.

It belongs to the lipid A palmitoyltransferase family. As to quaternary structure, homodimer.

It is found in the cell outer membrane. It catalyses the reaction a lipid A + a 1,2-diacyl-sn-glycero-3-phosphocholine = a hepta-acyl lipid A + a 2-acyl-sn-glycero-3-phosphocholine. The enzyme catalyses a lipid IVA + a 1,2-diacyl-sn-glycero-3-phosphocholine = a lipid IVB + a 2-acyl-sn-glycero-3-phosphocholine. The catalysed reaction is a lipid IIA + a 1,2-diacyl-sn-glycero-3-phosphocholine = a lipid IIB + a 2-acyl-sn-glycero-3-phosphocholine. Functionally, transfers a fatty acid residue from the sn-1 position of a phospholipid to the N-linked hydroxyfatty acid chain on the proximal unit of lipid A or its precursors. In Salmonella paratyphi C (strain RKS4594), this protein is Lipid A acyltransferase PagP.